We begin with the raw amino-acid sequence, 461 residues long: Cysteine--tRNA ligase (461 aa).

Cysteine 28 contributes to the Zn(2+) binding site. Positions 30 to 40 (MTVYDYCHLGH) match the 'HIGH' region motif. Zn(2+) contacts are provided by cysteine 212, histidine 237, and glutamate 241. The short motif at 269–273 (KMSKS) is the 'KMSKS' region element. Residue lysine 272 participates in ATP binding.

The protein belongs to the class-I aminoacyl-tRNA synthetase family. Monomer. The cofactor is Zn(2+).

The protein resides in the cytoplasm. It catalyses the reaction tRNA(Cys) + L-cysteine + ATP = L-cysteinyl-tRNA(Cys) + AMP + diphosphate. In Aromatoleum aromaticum (strain DSM 19018 / LMG 30748 / EbN1) (Azoarcus sp. (strain EbN1)), this protein is Cysteine--tRNA ligase.